A 189-amino-acid chain; its full sequence is Peptidyl-tRNA hydrolase (189 aa).

Y14 provides a ligand contact to tRNA. The active-site Proton acceptor is H19. Residues Y64, N66, and N112 each coordinate tRNA.

The protein belongs to the PTH family. Monomer.

Its subcellular location is the cytoplasm. The enzyme catalyses an N-acyl-L-alpha-aminoacyl-tRNA + H2O = an N-acyl-L-amino acid + a tRNA + H(+). Its function is as follows. Hydrolyzes ribosome-free peptidyl-tRNAs (with 1 or more amino acids incorporated), which drop off the ribosome during protein synthesis, or as a result of ribosome stalling. Catalyzes the release of premature peptidyl moieties from peptidyl-tRNA molecules trapped in stalled 50S ribosomal subunits, and thus maintains levels of free tRNAs and 50S ribosomes. The sequence is that of Peptidyl-tRNA hydrolase from Clostridium botulinum (strain Kyoto / Type A2).